The chain runs to 130 residues: Small ribosomal subunit protein uS11 (130 aa).

It belongs to the universal ribosomal protein uS11 family. In terms of assembly, part of the 30S ribosomal subunit. Interacts with proteins S7 and S18. Binds to IF-3.

Located on the platform of the 30S subunit, it bridges several disparate RNA helices of the 16S rRNA. Forms part of the Shine-Dalgarno cleft in the 70S ribosome. The protein is Small ribosomal subunit protein uS11 of Campylobacter hominis (strain ATCC BAA-381 / DSM 21671 / CCUG 45161 / LMG 19568 / NCTC 13146 / CH001A).